The chain runs to 500 residues: Probable cytosol aminopeptidase (500 aa).

Mn(2+) contacts are provided by Lys-274 and Asp-279. Lys-286 is an active-site residue. Mn(2+) is bound by residues Asp-297, Asp-356, and Glu-358. Residue Arg-360 is part of the active site.

The protein belongs to the peptidase M17 family. Requires Mn(2+) as cofactor.

The protein resides in the cytoplasm. The catalysed reaction is Release of an N-terminal amino acid, Xaa-|-Yaa-, in which Xaa is preferably Leu, but may be other amino acids including Pro although not Arg or Lys, and Yaa may be Pro. Amino acid amides and methyl esters are also readily hydrolyzed, but rates on arylamides are exceedingly low.. The enzyme catalyses Release of an N-terminal amino acid, preferentially leucine, but not glutamic or aspartic acids.. Presumably involved in the processing and regular turnover of intracellular proteins. Catalyzes the removal of unsubstituted N-terminal amino acids from various peptides. The protein is Probable cytosol aminopeptidase of Saccharophagus degradans (strain 2-40 / ATCC 43961 / DSM 17024).